A 274-amino-acid chain; its full sequence is ATP synthase subunit delta (274 aa).

This sequence belongs to the ATPase delta chain family. F-type ATPases have 2 components, F(1) - the catalytic core - and F(0) - the membrane proton channel. F(1) has five subunits: alpha(3), beta(3), gamma(1), delta(1), epsilon(1). F(0) has three main subunits: a(1), b(2) and c(10-14). The alpha and beta chains form an alternating ring which encloses part of the gamma chain. F(1) is attached to F(0) by a central stalk formed by the gamma and epsilon chains, while a peripheral stalk is formed by the delta and b chains.

It is found in the cell membrane. In terms of biological role, f(1)F(0) ATP synthase produces ATP from ADP in the presence of a proton or sodium gradient. F-type ATPases consist of two structural domains, F(1) containing the extramembraneous catalytic core and F(0) containing the membrane proton channel, linked together by a central stalk and a peripheral stalk. During catalysis, ATP synthesis in the catalytic domain of F(1) is coupled via a rotary mechanism of the central stalk subunits to proton translocation. Its function is as follows. This protein is part of the stalk that links CF(0) to CF(1). It either transmits conformational changes from CF(0) to CF(1) or is implicated in proton conduction. This is ATP synthase subunit delta from Streptomyces coelicolor (strain ATCC BAA-471 / A3(2) / M145).